A 520-amino-acid polypeptide reads, in one-letter code: Probable glycerol-3-phosphate acyltransferase 3 (520 aa).

5 helical membrane passes run Ile-5–Leu-20, Tyr-64–Leu-84, Ile-88–Ile-108, Thr-264–Ala-284, and Leu-286–Cys-306. An HXXXXD motif motif is present at residues His-334–Asp-339.

This sequence belongs to the GPAT/DAPAT family. Widely expressed at low level. Expressed at higher level in seedlings and leaves.

The protein resides in the membrane. The enzyme catalyses sn-glycerol 3-phosphate + an acyl-CoA = a 1-acyl-sn-glycero-3-phosphate + CoA. Its pathway is phospholipid metabolism; CDP-diacylglycerol biosynthesis; CDP-diacylglycerol from sn-glycerol 3-phosphate: step 1/3. Functionally, esterifies acyl-group from acyl-ACP to the sn-1 position of glycerol-3-phosphate, an essential step in glycerolipid biosynthesis. The chain is Probable glycerol-3-phosphate acyltransferase 3 (GPAT3) from Arabidopsis thaliana (Mouse-ear cress).